The primary structure comprises 213 residues: uncharacterized protein (213 aa).

S-adenosyl-L-methionine is bound by residues G53, E74, and D97.

This sequence belongs to the methyltransferase superfamily. YrrT family.

Could be a S-adenosyl-L-methionine-dependent methyltransferase. This is an uncharacterized protein from Geobacillus sp. (strain WCH70).